The following is a 468-amino-acid chain: Sorting and assembly machinery component 50 homolog B (468 aa).

The tract at residues 1-25 is disordered; it reads MGTVHARSLDPLPMNGPDFGSPDDA. The POTRA domain maps to 44–124; the sequence is VVVQRVHFEG…LDVTFEVTEL (81 aa).

It belongs to the SAM50/omp85 family. In terms of assembly, associates with the mitochondrial contact site and cristae organizing system (MICOS) complex (also known as MINOS or MitOS complex).

Its subcellular location is the mitochondrion outer membrane. In terms of biological role, may play a role in the maintenance of the structure of mitochondrial cristae. The sequence is that of Sorting and assembly machinery component 50 homolog B (samm50-b) from Xenopus laevis (African clawed frog).